Reading from the N-terminus, the 406-residue chain is Multifunctional CCA protein (406 aa).

Positions 8 and 11 each coordinate ATP. Residues Gly8 and Arg11 each contribute to the CTP site. Asp21 and Asp23 together coordinate Mg(2+). Residues Arg91, Arg137, and Arg140 each coordinate ATP. Residues Arg91, Arg137, and Arg140 each coordinate CTP. Residues 228 to 329 (TGIHTLMVAE…IKILNKFDVW (102 aa)) enclose the HD domain.

This sequence belongs to the tRNA nucleotidyltransferase/poly(A) polymerase family. Bacterial CCA-adding enzyme type 1 subfamily. As to quaternary structure, monomer. Can also form homodimers and oligomers. Mg(2+) is required as a cofactor. Ni(2+) serves as cofactor.

It carries out the reaction a tRNA precursor + 2 CTP + ATP = a tRNA with a 3' CCA end + 3 diphosphate. It catalyses the reaction a tRNA with a 3' CCA end + 2 CTP + ATP = a tRNA with a 3' CCACCA end + 3 diphosphate. Catalyzes the addition and repair of the essential 3'-terminal CCA sequence in tRNAs without using a nucleic acid template. Adds these three nucleotides in the order of C, C, and A to the tRNA nucleotide-73, using CTP and ATP as substrates and producing inorganic pyrophosphate. tRNA 3'-terminal CCA addition is required both for tRNA processing and repair. Also involved in tRNA surveillance by mediating tandem CCA addition to generate a CCACCA at the 3' terminus of unstable tRNAs. While stable tRNAs receive only 3'-terminal CCA, unstable tRNAs are marked with CCACCA and rapidly degraded. The sequence is that of Multifunctional CCA protein from Vibrio parahaemolyticus serotype O3:K6 (strain RIMD 2210633).